A 571-amino-acid chain; its full sequence is MTILPKKKPPPPDADPANEPPPPGPMPPAPRRGGGVGVGGGGTGVGGGDRDRDSGVVGARPRASPPPQGPLPGPPGALHRWALAVPPGAVAGPRPQQASPPPCGGPGGPGGGPGDALGAAAAGVGAAGVVVGVGGAVGVGGCCSGPGHSKRRRQAPGVGAVGGGSPEREEVGAGYNSEDEYEAAAARIEAMDPATVEQQEHWFEKALRDKKGFIIKQMKEDGACLFRAVADQVYGDQDMHEVVRKHCMDYLMKNADYFSNYVTEDFTTYINRKRKNNCHGNHIEMQAMAEMYNRPVEVYQYSTGTSAVEPINTFHGIHQNEDEPIRVSYHRNIHYNSVVNPNKATIGVGLGLPSFKPGFAEQSLMKNAIKTSEESWIEQQMLEDKKRATDWEATNEAIEEQVARESYLQWLRDQEKQARQVRGPSQPRKASATCSSATAAASSGLEEWTSRSPRQRSSASSPEHPELHAELGMKPPSPGTVLALAKPPSPCAPGTSSQFSAGADRATSPLVSLYPALECRALIQQMSPSAFGLNDWDDDEILASVLAVSQQEYLDSMKKNKVHRDPPPDKS.

Disordered stretches follow at residues 1 to 111 (MTIL…GPGG) and 146 to 175 (PGHSKRRRQAPGVGAVGGGSPEREEVGAGY). The span at 11-30 (PPDADPANEPPPPGPMPPAP) shows a compositional bias: pro residues. Residues 32–47 (RGGGVGVGGGGTGVGG) show a composition bias toward gly residues. Residues 63 to 75 (ASPPPQGPLPGPP) are compositionally biased toward pro residues. The residue at position 64 (Ser-64) is a Phosphoserine. The span at 84-97 (AVPPGAVAGPRPQQ) shows a compositional bias: low complexity. Ser-165 is subject to Phosphoserine. Position 175 is a phosphotyrosine (Tyr-175). Residue Ser-177 is modified to Phosphoserine. The residue at position 195 (Thr-195) is a Phosphothreonine. The region spanning 213–341 (FIIKQMKEDG…NIHYNSVVNP (129 aa)) is the OTU domain. Residues 218-224 (MKEDGAC) form a cys-loop region. Asp-221 is a catalytic residue. The active-site Nucleophile is the Cys-224. A variable-loop region spans residues 273 to 283 (KRKNNCHGNHI). The residue at position 328 (Ser-328) is a Phosphoserine; by MTOR. The interval 329 to 334 (YHRNIH) is his-loop. His-334 is an active-site residue. Ser-337 and Ser-375 each carry phosphoserine. Residues 418–502 (ARQVRGPSQP…PGTSSQFSAG (85 aa)) are disordered. 2 stretches are compositionally biased toward low complexity: residues 430-443 (ASATCSSATAAASS) and 450-462 (SRSPRQRSSASSP). Ser-452 carries the post-translational modification Phosphoserine. Thr-507 carries the post-translational modification Phosphothreonine. Ser-508 carries the post-translational modification Phosphoserine; by MTOR.

The protein belongs to the peptidase C85 family. As to quaternary structure, interacts with TRAF3. Phosphorylation at Ser-177 is required for deubiquitinating activity. Phosphorylation at Ser-328, Ser-337 and Ser-508 by MTOR promotes its activity. In terms of tissue distribution, expressed in various tissues, including the liver and placenta, as well as in peripheral blood leukocytes.

It is found in the nucleus. The catalysed reaction is Thiol-dependent hydrolysis of ester, thioester, amide, peptide and isopeptide bonds formed by the C-terminal Gly of ubiquitin (a 76-residue protein attached to proteins as an intracellular targeting signal).. Inhibited by N-ethyl-maleimide (NEM). In terms of biological role, deubiquitinating enzyme that functions as a negative regulator of the innate immune system. Has peptidase activity towards 'Lys-48'- and 'Lys-63'-linked polyubiquitin chains. Can also cleave 'Lys-11'-linked ubiquitin chains (in vitro). Acts via TRAF3 deubiquitination and subsequent suppression of type I interferon (IFN) production. Controls neuroectodermal differentiation through cleaving 'Lys-48'-linked ubiquitin chains to counteract degradation of select chromatin regulators such as ARID1A, HDAC2 and HCF1. Acts as a positive regulator of mTORC1 and mTORC2 signaling following phosphorylation by MTOR: acts by mediating deubiquitination of BTRC, leading to its stability. In Homo sapiens (Human), this protein is OTU domain-containing protein 5.